The following is a 405-amino-acid chain: MSGSWLDEIPARIAELDAAHLRRRRRATAPLQGAASGAHMEVDGHPMLAFCSNDYLGLAGHPTLVRAACAGAQAFGVGSGGSPLVSGHSTANAALEEQLAHFVQLPRALYFYAGYATNAGIVPALVGAGDALFSDALNHACLIDGARLSRAHVHRYAHADLGDLAAQLAASTARRKLVISDAVFSMDGNVADIRGLLALCDQYDALLLLDDAHGFGVLGPQGRGSLAEAGLTGANASPRVLYMATLGKAAGVAGAFVAGSDMLVEWLLQKTRSYIFATAAPPMLASALQASVALIEAEDERREALAERIAELRAGLTPLLARTGWQLLPSRTAVQALVIGSNATALAVMEGLRERGLWVPAIRPPTVPEGTARLRIALSASHTRIDVQLLLTALDEVSRLAPPLP.

Arg23 is a substrate binding site. Position 114–115 (114–115 (GY)) interacts with pyridoxal 5'-phosphate. His139 is a substrate binding site. 3 residues coordinate pyridoxal 5'-phosphate: Ser185, His213, and Thr245. Lys248 is subject to N6-(pyridoxal phosphate)lysine. A substrate-binding site is contributed by Thr366.

Belongs to the class-II pyridoxal-phosphate-dependent aminotransferase family. BioF subfamily. Homodimer. The cofactor is pyridoxal 5'-phosphate.

It carries out the reaction 6-carboxyhexanoyl-[ACP] + L-alanine + H(+) = (8S)-8-amino-7-oxononanoate + holo-[ACP] + CO2. Its pathway is cofactor biosynthesis; biotin biosynthesis. Functionally, catalyzes the decarboxylative condensation of pimeloyl-[acyl-carrier protein] and L-alanine to produce 8-amino-7-oxononanoate (AON), [acyl-carrier protein], and carbon dioxide. This Delftia acidovorans (strain DSM 14801 / SPH-1) protein is 8-amino-7-oxononanoate synthase.